The sequence spans 89 residues: Small ribosomal subunit protein uS15 (89 aa).

It belongs to the universal ribosomal protein uS15 family. As to quaternary structure, part of the 30S ribosomal subunit. Forms a bridge to the 50S subunit in the 70S ribosome, contacting the 23S rRNA.

Functionally, one of the primary rRNA binding proteins, it binds directly to 16S rRNA where it helps nucleate assembly of the platform of the 30S subunit by binding and bridging several RNA helices of the 16S rRNA. Its function is as follows. Forms an intersubunit bridge (bridge B4) with the 23S rRNA of the 50S subunit in the ribosome. This chain is Small ribosomal subunit protein uS15, found in Shewanella piezotolerans (strain WP3 / JCM 13877).